A 200-amino-acid polypeptide reads, in one-letter code: ATP-dependent Clp protease proteolytic subunit (200 aa).

S99 acts as the Nucleophile in catalysis. Residue H124 is part of the active site.

The protein belongs to the peptidase S14 family. As to quaternary structure, fourteen ClpP subunits assemble into 2 heptameric rings which stack back to back to give a disk-like structure with a central cavity, resembling the structure of eukaryotic proteasomes.

It is found in the cytoplasm. It catalyses the reaction Hydrolysis of proteins to small peptides in the presence of ATP and magnesium. alpha-casein is the usual test substrate. In the absence of ATP, only oligopeptides shorter than five residues are hydrolyzed (such as succinyl-Leu-Tyr-|-NHMec, and Leu-Tyr-Leu-|-Tyr-Trp, in which cleavage of the -Tyr-|-Leu- and -Tyr-|-Trp bonds also occurs).. Its function is as follows. Cleaves peptides in various proteins in a process that requires ATP hydrolysis. Has a chymotrypsin-like activity. Plays a major role in the degradation of misfolded proteins. The polypeptide is ATP-dependent Clp protease proteolytic subunit (Syntrophomonas wolfei subsp. wolfei (strain DSM 2245B / Goettingen)).